Here is a 156-residue protein sequence, read N- to C-terminus: Small ribosomal subunit protein uS7 (156 aa).

This sequence belongs to the universal ribosomal protein uS7 family. Part of the 30S ribosomal subunit. Contacts proteins S9 and S11.

One of the primary rRNA binding proteins, it binds directly to 16S rRNA where it nucleates assembly of the head domain of the 30S subunit. Is located at the subunit interface close to the decoding center, probably blocks exit of the E-site tRNA. The protein is Small ribosomal subunit protein uS7 of Campylobacter jejuni subsp. jejuni serotype O:6 (strain 81116 / NCTC 11828).